Reading from the N-terminus, the 34-residue chain is Photosystem I reaction center subunit XII (34 aa).

A helical transmembrane segment spans residues 10–32; that stretch reads IFIALVVAAHAGVLAVRLCVSLY.

This sequence belongs to the PsaM family.

The protein localises to the cellular thylakoid membrane. This chain is Photosystem I reaction center subunit XII, found in Synechococcus sp. (strain WH7803).